The chain runs to 179 residues: GTP-dependent dephospho-CoA kinase (179 aa).

GTP-binding residues include aspartate 55, valine 57, aspartate 74, lysine 76, and glutamate 128.

This sequence belongs to the GTP-dependent DPCK family.

The enzyme catalyses 3'-dephospho-CoA + GTP = GDP + CoA + H(+). Its pathway is cofactor biosynthesis; coenzyme A biosynthesis. Catalyzes the GTP-dependent phosphorylation of the 3'-hydroxyl group of dephosphocoenzyme A to form coenzyme A (CoA). The polypeptide is GTP-dependent dephospho-CoA kinase (Saccharolobus solfataricus (strain ATCC 35092 / DSM 1617 / JCM 11322 / P2) (Sulfolobus solfataricus)).